Here is a 333-residue protein sequence, read N- to C-terminus: Dihydroorotate dehydrogenase (quinone) (333 aa).

FMN contacts are provided by residues Ala-56–Lys-60 and Thr-80. Lys-60 lines the substrate pocket. Asn-105–Phe-109 serves as a coordination point for substrate. The FMN site is built by Asn-133 and Asn-166. Asn-166 provides a ligand contact to substrate. Catalysis depends on Ser-169, which acts as the Nucleophile. Asn-171 provides a ligand contact to substrate. Residues Lys-211 and Thr-239 each contribute to the FMN site. Residue Asn-240–Thr-241 coordinates substrate. Residues Gly-262, Gly-291, and Tyr-312–Ser-313 each bind FMN.

This sequence belongs to the dihydroorotate dehydrogenase family. Type 2 subfamily. As to quaternary structure, monomer. It depends on FMN as a cofactor.

The protein localises to the cell membrane. The enzyme catalyses (S)-dihydroorotate + a quinone = orotate + a quinol. It participates in pyrimidine metabolism; UMP biosynthesis via de novo pathway; orotate from (S)-dihydroorotate (quinone route): step 1/1. In terms of biological role, catalyzes the conversion of dihydroorotate to orotate with quinone as electron acceptor. In Legionella pneumophila (strain Corby), this protein is Dihydroorotate dehydrogenase (quinone).